The following is a 446-amino-acid chain: Exodeoxyribonuclease 7 large subunit (446 aa).

Belongs to the XseA family. As to quaternary structure, heterooligomer composed of large and small subunits.

It localises to the cytoplasm. The catalysed reaction is Exonucleolytic cleavage in either 5'- to 3'- or 3'- to 5'-direction to yield nucleoside 5'-phosphates.. Its function is as follows. Bidirectionally degrades single-stranded DNA into large acid-insoluble oligonucleotides, which are then degraded further into small acid-soluble oligonucleotides. The protein is Exodeoxyribonuclease 7 large subunit of Shewanella denitrificans (strain OS217 / ATCC BAA-1090 / DSM 15013).